The chain runs to 423 residues: Transmembrane protease serine 11E (423 aa).

Over 1-18 (MYRSCVVRARKRTCVEPW) the chain is Cytoplasmic. The helical; Signal-anchor for type II membrane protein transmembrane segment at 19–39 (VIGIISFLSLIVLAVCIGLTV) threads the bilayer. The Extracellular portion of the chain corresponds to 40–423 (HYVRYNHRRT…RHWIASNTGI (384 aa)). The SEA domain occupies 48-166 (RTYNYYSTLS…ESVKIKKINK (119 aa)). 4 N-linked (GlcNAc...) asparagine glycosylation sites follow: N74, N165, N182, and N223. Cystine bridges form between C176–C297, C217–C233, C342–C358, and C369–C398. The Peptidase S1 domain maps to 192–422 (IVGGTPVEEE…FRHWIASNTG (231 aa)). Residues H232 and D277 each act as charge relay system in the active site. S373 serves as the catalytic Charge relay system.

The protein belongs to the peptidase S1 family. In terms of assembly, forms a heterodimer with SERPINA5 and SERPINE1. N-glycosylated. As to expression, expressed in epidermal, oral and male reproductive tissues.

Its subcellular location is the cell membrane. The protein resides in the secreted. Its activity is regulated as follows. Inhibited by SERPINA5. Functionally, serine protease which possesses both gelatinolytic and caseinolytic activities. Shows a preference for Arg in the P1 position. The polypeptide is Transmembrane protease serine 11E (Tmprss11e) (Mus musculus (Mouse)).